The primary structure comprises 275 residues: Voltage-dependent calcium channel gamma-7 subunit (275 aa).

The next 4 helical transmembrane spans lie at 8–28 (ALTL…GIAV), 103–123 (FPMV…IGHI), 129–149 (ILAF…VVGL), and 179–199 (FAFA…SVYL). Phosphoserine is present on residues S222, S225, and S273.

This sequence belongs to the PMP-22/EMP/MP20 family. CACNG subfamily. As to quaternary structure, interacts with CACNA1C. Identified in a complex with the L-type calcium channel subunits CACNA1C, CACNA2D1 and either CACNB1 or CACNB2. Acts as an auxiliary subunit for AMPA-selective glutamate receptors (AMPARs), such as GRIA1 and GRIA2. In terms of tissue distribution, detected in heart left ventricle. Widely expressed.

It localises to the cell membrane. In terms of biological role, regulates the activity of L-type calcium channels that contain CACNA1C as pore-forming subunit. Regulates the trafficking and gating properties of AMPA-selective glutamate receptors (AMPARs). Promotes their targeting to the cell membrane and synapses and modulates their gating properties by slowing their rates of activation, deactivation and desensitization and by mediating their resensitization. Displays subunit-specific AMPA receptor regulation. Shows specificity only for GRIA1 and GRIA2. This Homo sapiens (Human) protein is Voltage-dependent calcium channel gamma-7 subunit (CACNG7).